A 181-amino-acid chain; its full sequence is Large ribosomal subunit protein uL5 (181 aa).

The protein belongs to the universal ribosomal protein uL5 family. As to quaternary structure, part of the 50S ribosomal subunit; part of the 5S rRNA/L5/L18/L25 subcomplex. Contacts the 5S rRNA and the P site tRNA. Forms a bridge to the 30S subunit in the 70S ribosome.

Its function is as follows. This is one of the proteins that bind and probably mediate the attachment of the 5S RNA into the large ribosomal subunit, where it forms part of the central protuberance. In the 70S ribosome it contacts protein S13 of the 30S subunit (bridge B1b), connecting the 2 subunits; this bridge is implicated in subunit movement. Contacts the P site tRNA; the 5S rRNA and some of its associated proteins might help stabilize positioning of ribosome-bound tRNAs. This is Large ribosomal subunit protein uL5 from Helicobacter pylori (strain ATCC 700392 / 26695) (Campylobacter pylori).